Reading from the N-terminus, the 303-residue chain is GTPase Era (303 aa).

The region spanning 8-176 (YCGFIAIVGR…ASIVRKHMPE (169 aa)) is the Era-type G domain. The tract at residues 16 to 23 (GRPNVGKS) is G1. 16-23 (GRPNVGKS) serves as a coordination point for GTP. The segment at 42–46 (QTTRH) is G2. The G3 stretch occupies residues 63-66 (DTPG). GTP is bound by residues 63-67 (DTPGL) and 125-128 (NKVD). Residues 125 to 128 (NKVD) form a G4 region. The tract at residues 155–157 (ISA) is G5. The 78-residue stretch at 207-284 (LGEELPYSVT…HLELWVKVKS (78 aa)) folds into the KH type-2 domain.

Belongs to the TRAFAC class TrmE-Era-EngA-EngB-Septin-like GTPase superfamily. Era GTPase family. As to quaternary structure, monomer.

It localises to the cytoplasm. Its subcellular location is the cell inner membrane. Functionally, an essential GTPase that binds both GDP and GTP, with rapid nucleotide exchange. Plays a role in 16S rRNA processing and 30S ribosomal subunit biogenesis and possibly also in cell cycle regulation and energy metabolism. The sequence is that of GTPase Era from Yersinia pseudotuberculosis serotype O:1b (strain IP 31758).